Consider the following 288-residue polypeptide: Damage-control phosphatase AF_1104 (288 aa).

A Subfamily I CxxC motif motif is present at residues Cys-7 to Cys-10. Mn(2+)-binding residues include Asp-160, Asn-161, and Asp-194. Residues Ala-247–Glu-250 carry the Subfamily I GNFE-like motif motif. Residues Lys-267–Cys-268 carry the Subfamily I KC motif motif.

This sequence belongs to the damage-control phosphatase family. Nucleotides phosphatase I subfamily. Requires [2Fe-2S] cluster as cofactor. It depends on Mn(2+) as a cofactor. Ni(2+) is required as a cofactor.

Metal-dependent phosphatase with probable damage-control functions. Could hydrolyze oxidatively damaged purine nucleotides or their biosynthetic intermediates. This chain is Damage-control phosphatase AF_1104, found in Archaeoglobus fulgidus (strain ATCC 49558 / DSM 4304 / JCM 9628 / NBRC 100126 / VC-16).